The following is a 372-amino-acid chain: Alanine racemase (372 aa).

Catalysis depends on Lys-33, which acts as the Proton acceptor; specific for D-alanine. Position 33 is an N6-(pyridoxal phosphate)lysine (Lys-33). Arg-131 contributes to the substrate binding site. The active-site Proton acceptor; specific for L-alanine is Tyr-261. Residue Met-309 coordinates substrate.

Belongs to the alanine racemase family. It depends on pyridoxal 5'-phosphate as a cofactor.

It catalyses the reaction L-alanine = D-alanine. It functions in the pathway amino-acid biosynthesis; D-alanine biosynthesis; D-alanine from L-alanine: step 1/1. Catalyzes the interconversion of L-alanine and D-alanine. May also act on other amino acids. In Salinispora arenicola (strain CNS-205), this protein is Alanine racemase (alr).